Here is a 244-residue protein sequence, read N- to C-terminus: Capsid protein (244 aa).

A Bipartite nuclear localization signal motif is present at residues 1 to 24 (MSTSKRKRADEAQWNKRSTKKKGS). Positions 1 to 39 (MSTSKRKRADEAQWNKRSTKKKGSAPQAKKPGGKVEKPS) are disordered.

The protein belongs to the geminiviridae capsid protein family. In terms of assembly, homomultimer. Interacts with the movement protein. Binds to single-stranded and double-stranded viral DNA.

The protein resides in the virion. It localises to the host nucleus. Encapsidates the viral genome into characteristic twinned ('geminate') particles. Binds the genomic viral ssDNA and shuttles it into and out of the cell nucleus. Plays a role in protection of the genome from degradation, virus acquisition and transmission by insect vectors, infectivity, and systemic movement. The CP of monopartite geminiviruses is absolutely essential for virus movement. The polypeptide is Capsid protein (Avena sativa (Oat)).